Consider the following 527-residue polypeptide: Lysine--tRNA ligase (527 aa).

Mg(2+) is bound by residues glutamate 431 and glutamate 438.

This sequence belongs to the class-II aminoacyl-tRNA synthetase family. In terms of assembly, homodimer. Mg(2+) serves as cofactor.

The protein resides in the cytoplasm. It catalyses the reaction tRNA(Lys) + L-lysine + ATP = L-lysyl-tRNA(Lys) + AMP + diphosphate. In Chlamydia pneumoniae (Chlamydophila pneumoniae), this protein is Lysine--tRNA ligase (lysS).